The sequence spans 418 residues: Hydroxysteroid dehydrogenase-like protein 2 (418 aa).

Residues 17–23 (GASRGIG), K42, and D74 each bind NADP(+). K42 carries the post-translational modification N6-(2-hydroxyisobutyryl)lysine. At K116 the chain carries N6-acetyllysine. Y168 acts as the Proton acceptor in catalysis. Residue K172 participates in NADP(+) binding. The SCP2 domain occupies 306-415 (RSGAVEETFR…KLEKLMNQMN (110 aa)). The residue at position 318 (K318) is an N6-succinyllysine.

This sequence belongs to the short-chain dehydrogenases/reductases (SDR) family.

It localises to the peroxisome. The protein resides in the mitochondrion. Functionally, has apparently no steroid dehydrogenase activity. Controls bile acid (BA) and lipid metabolism in response to nutritional cues. In Bos taurus (Bovine), this protein is Hydroxysteroid dehydrogenase-like protein 2 (HSDL2).